A 421-amino-acid chain; its full sequence is GTPase Obg (421 aa).

In terms of domain architecture, Obg spans 1–158 (MFIDVAKIEL…KTIKLELKLL (158 aa)). Residues 21-40 (AFRREKYEPSGGPAGGDGGD) are disordered. One can recognise an OBG-type G domain in the interval 159–328 (ADVGLIGLPN…LMYLIADTLD (170 aa)). GTP contacts are provided by residues 165-172 (GLPNVGKS), 190-194 (FTTLE), 211-214 (DIPG), 281-284 (NKTD), and 309-311 (SAA). Mg(2+) is bound by residues Ser-172 and Thr-192. The region spanning 344–421 (FEEEKEPDFK…IGDVEFDFYE (78 aa)) is the OCT domain.

The protein belongs to the TRAFAC class OBG-HflX-like GTPase superfamily. OBG GTPase family. Monomer. The cofactor is Mg(2+).

Its subcellular location is the cytoplasm. Its function is as follows. An essential GTPase which binds GTP, GDP and possibly (p)ppGpp with moderate affinity, with high nucleotide exchange rates and a fairly low GTP hydrolysis rate. Plays a role in control of the cell cycle, stress response, ribosome biogenesis and in those bacteria that undergo differentiation, in morphogenesis control. This Finegoldia magna (strain ATCC 29328 / DSM 20472 / WAL 2508) (Peptostreptococcus magnus) protein is GTPase Obg.